Here is a 239-residue protein sequence, read N- to C-terminus: DNA repair protein RecO (239 aa).

It belongs to the RecO family.

Its function is as follows. Involved in DNA repair and RecF pathway recombination. The protein is DNA repair protein RecO of Bifidobacterium animalis subsp. lactis (strain AD011).